The following is a 507-amino-acid chain: ATP synthase subunit alpha, plastid (507 aa).

Residue 170-177 (GDRQTGKT) coordinates ATP.

This sequence belongs to the ATPase alpha/beta chains family. F-type ATPases have 2 components, CF(1) - the catalytic core - and CF(0) - the membrane proton channel. CF(1) has five subunits: alpha(3), beta(3), gamma(1), delta(1), epsilon(1). CF(0) has four main subunits: a, b, b' and c.

It localises to the plastid membrane. The enzyme catalyses ATP + H2O + 4 H(+)(in) = ADP + phosphate + 5 H(+)(out). Functionally, produces ATP from ADP in the presence of a proton gradient across the membrane. The alpha chain is a regulatory subunit. The protein is ATP synthase subunit alpha, plastid of Cuscuta gronovii (Common dodder).